Reading from the N-terminus, the 393-residue chain is Serine/threonine-protein phosphatase 2A activator 1 (393 aa).

The segment at 328–393 (EKEEESIEQA…TSFSRDRLRR (66 aa)) is disordered. Polar residues-rich tracts occupy residues 335–356 (EQAN…TSTS) and 365–386 (SGNN…QTSF). Ser-341 carries the phosphoserine modification.

Belongs to the PTPA-type PPIase family. Interacts with the phosphatase PP2A-like catalytic subunits PPG1, PPH3 and SIT4. Forms a ternary complex with SIT4-TAP42.

The protein localises to the cytoplasm. It localises to the nucleus. The catalysed reaction is [protein]-peptidylproline (omega=180) = [protein]-peptidylproline (omega=0). In terms of biological role, PPIases accelerate the folding of proteins. It catalyzes the cis-trans isomerization of proline imidic peptide bonds in oligopeptides. Acts as a regulatory subunit for TAP42-associated PP2A-like phosphatases modulating their activity or substrate specificity, probably by inducing a conformational change in the catalytic subunit, a direct target of the PPIase. Can reactivate inactive phosphatase PP2A-phosphatase methylesterase complexes (PP2Ai) in presence of ATP and Mg(2+) by dissociating the inactive form from the complex. Involved in the regulation of cell cycle progression, mitotic spindle formation, bud morphogenesis and DNA repair. The protein is Serine/threonine-protein phosphatase 2A activator 1 (RRD1) of Saccharomyces cerevisiae (strain ATCC 204508 / S288c) (Baker's yeast).